A 252-amino-acid chain; its full sequence is Type I iodothyronine deiodinase (252 aa).

Residues 1–17 are Extracellular-facing; sequence MESLLQTIKLMLRYIQK. Residues 18-38 traverse the membrane as a helical; Signal-anchor for type III membrane protein segment; it reads ALILFFLFLYVVVGKVLMFLF. At 39–252 the chain is on the cytoplasmic side; that stretch reads PQTMASVLKS…EVCSVLEKKK (214 aa). The active site involves selenocysteine 130. A non-standard amino acid (selenocysteine) is located at residue selenocysteine 130.

Belongs to the iodothyronine deiodinase family. As to quaternary structure, predominantly monomer. Can form homodimers but homodimerization is not essential for enzyme activity.

The protein resides in the cell membrane. Its subcellular location is the endoplasmic reticulum membrane. It is found in the basolateral cell membrane. It carries out the reaction 3,3',5-triiodo-L-thyronine + iodide + A + H(+) = L-thyroxine + AH2. The catalysed reaction is 3,3',5'-triiodo-L-thyronine + iodide + A + H(+) = L-thyroxine + AH2. The enzyme catalyses 3,3'-diiodo-L-thyronine + iodide + A + H(+) = 3,3',5'-triiodo-L-thyronine + AH2. It catalyses the reaction 3,3'-diiodo-L-thyronine + iodide + A + H(+) = 3,3',5-triiodo-L-thyronine + AH2. It carries out the reaction 3'-iodo-L-thyronine + iodide + A + H(+) = 3',5'-diiodo-L-thyronine + AH2. The catalysed reaction is 3-iodo-L-thyronine + iodide + A + H(+) = 3,5-diiodo-L-thyronine + AH2. The enzyme catalyses 3-iodo-L-thyronine + iodide + A + H(+) = 3,3'-diiodo-L-thyronine + AH2. It catalyses the reaction 3,3'-diiodothyronamine + iodide + A + H(+) = 3,3',5'-triiodothyronamine + AH2. It carries out the reaction 3'-iodothyronamine + iodide + A + H(+) = 3',5'-diiodothyronamine + AH2. The catalysed reaction is 3-iodothyronamine + iodide + A + H(+) = 3,3'-diiodothyronamine + AH2. The enzyme catalyses 3,3'-diiodothyronamine + iodide + A + H(+) = 3,3',5-triiodothyronamine + AH2. It catalyses the reaction 3-iodothyronamine + iodide + A + H(+) = 3,5-diiodothyronamine + AH2. It carries out the reaction 3,3'-diiodo-L-thyronine sulfate + iodide + A + H(+) = 3,3',5'-triiodo-L-thyronine sulfate + AH2. The catalysed reaction is 3,3',5'-triiodo-L-thyronine sulfate + iodide + A + H(+) = L-thyroxine sulfate + AH2. The enzyme catalyses 3,3'-diiodo-L-thyronine sulfate + iodide + A + H(+) = 3,3',5-triiodo-L-thyronine sulfate + AH2. With respect to regulation, lacks sensitivity to 6-n-propylthiouracil. Its function is as follows. Plays a crucial role in the metabolism of thyroid hormones (TH) and has specific roles in TH activation and inactivation by deiodination. Catalyzes the deiodination of L-thyroxine (T4) to 3,5,3'-triiodothyronine (T3) and 3,3',5'-triiodothyronine (rT3) to 3,3'-diiodothyronine (3,3'-T2) via outer-ring deiodination (ORD). Catalyzes the deiodiantion of T4 to rT3 and T3 to 3,3'-T2 via inner-ring deiodination (IRD). Catalyzes the deiodination of 3',5'-diiodothyronine (3',5'-T2) to 3'-monoiodothyronine (3'-T1) via ORD. Catalyzes the deiodination of 3,5-diiodothyronine (3,5-T2) to 3-monoiodothyronine (3-T1) and 3,3'-T2 to 3-T1 via IRD. Catalyzes the phenolic ring deiodinations of 3,3',5'-triiodothyronamine, 3',5'-diiodothyronamine and 3,3'-diiodothyronamine as well as tyrosyl ring deiodinations of 3,5,3'-triiodothyronamine and 3,5-diiodothyronamine. Catalyzes the deiodination of L-thyroxine sulfate and 3,3',5-triiodo-L-thyronine sulfate via IRD and of 3,3',5'-triiodo-L-thyronine sulfate via ORD. In Xenopus laevis (African clawed frog), this protein is Type I iodothyronine deiodinase (dio1).